The chain runs to 236 residues: Probable transcriptional regulatory protein UU295 (236 aa).

It belongs to the TACO1 family.

The protein resides in the cytoplasm. In Ureaplasma parvum serovar 3 (strain ATCC 700970), this protein is Probable transcriptional regulatory protein UU295.